Here is a 419-residue protein sequence, read N- to C-terminus: CDP-diacylglycerol--serine O-phosphatidyltransferase 3 (419 aa).

The tract at residues 1 to 51 (MPVRRRWYPPSSTAAQPSPDGGDVNTDDADACPSSRQQRPPSLPQHSAPIH) is disordered. The span at 33-47 (PSSRQQRPPSLPQHS) shows a compositional bias: low complexity. 7 consecutive transmembrane segments (helical) span residues 103–123 (PHTV…SGVL), 142–162 (WAMI…TILI), 168–188 (VWRL…FLLF), 260–280 (LLLW…RHML), 287–307 (WWDS…WAGM), 359–379 (FIQV…TFFL), and 384–404 (WIPP…LIAI).

It belongs to the CDP-alcohol phosphatidyltransferase class-I family.

The protein resides in the endoplasmic reticulum membrane. It carries out the reaction a CDP-1,2-diacyl-sn-glycerol + L-serine = a 1,2-diacyl-sn-glycero-3-phospho-L-serine + CMP + H(+). It functions in the pathway phospholipid metabolism; phosphatidylethanolamine biosynthesis; phosphatidylethanolamine from CDP-diacylglycerol: step 1/2. Functionally, catalyzes a base-exchange reaction in which the polar head group of phosphatidylethanolamine (PE) or phosphatidylcholine (PC) is replaced by L-serine. This chain is CDP-diacylglycerol--serine O-phosphatidyltransferase 3 (PSS3), found in Oryza sativa subsp. japonica (Rice).